The following is a 182-amino-acid chain: Pentatricopeptide repeat-containing protein At2g01360 (182 aa).

PPR repeat units lie at residues 30-64 (EKSA…QHSL), 65-95 (GVYH…LPDD), and 98-132 (GLSA…EIMP).

The protein belongs to the PPR family. P subfamily.

This Arabidopsis thaliana (Mouse-ear cress) protein is Pentatricopeptide repeat-containing protein At2g01360.